The following is a 218-amino-acid chain: Probable transaldolase (218 aa).

The active-site Schiff-base intermediate with substrate is Lys83.

This sequence belongs to the transaldolase family. Type 3B subfamily.

The protein resides in the cytoplasm. It carries out the reaction D-sedoheptulose 7-phosphate + D-glyceraldehyde 3-phosphate = D-erythrose 4-phosphate + beta-D-fructose 6-phosphate. It participates in carbohydrate degradation; pentose phosphate pathway; D-glyceraldehyde 3-phosphate and beta-D-fructose 6-phosphate from D-ribose 5-phosphate and D-xylulose 5-phosphate (non-oxidative stage): step 2/3. Functionally, transaldolase is important for the balance of metabolites in the pentose-phosphate pathway. This Thermotoga sp. (strain RQ2) protein is Probable transaldolase.